We begin with the raw amino-acid sequence, 1211 residues long: Sterol 3-beta-glucosyltransferase (1211 aa).

Basic and acidic residues predominate over residues 1 to 10 (MSQLRPRDSS). Residues 1–61 (MSQLRPRDSS…DETEAEDDID (61 aa)) are disordered. The 40-residue stretch at 196–235 (EKLKTTFDLSDDDEFVNDYPCWLLHEVFLQGHIYITSRYL) folds into the GRAM 1 domain. The PH domain occupies 248 to 347 (VTMSGALSIR…WVTDLRKHIF (100 aa)). 2 disordered regions span residues 422 to 452 (LTDS…KLSR) and 500 to 531 (VVPN…PSNW). The span at 423–432 (TDSDSSESDS) shows a compositional bias: acidic residues. Residues 507–525 (SELKQDHAGDAPKDSEEPS) are compositionally biased toward basic and acidic residues. Residues 586–652 (SRFRKHFSLP…SDIENVYNLK (67 aa)) enclose the GRAM 2 domain. S770, R771, D773, N1046, N1072, V1073, H1075, H1088, S1091, G1092, T1093, D1112, and Q1113 together coordinate UDP-alpha-D-glucose.

The protein belongs to the glycosyltransferase 28 family.

The protein localises to the cytoplasm. It is found in the preautophagosomal structure membrane. The catalysed reaction is a sterol + UDP-alpha-D-glucose = a sterol 3-beta-D-glucoside + UDP + H(+). It carries out the reaction ergosterol + UDP-alpha-D-glucose = ergosteryl 3-beta-D-glucoside + UDP + H(+). Its function is as follows. Sterol glycosyltransferase responsible for the glycosylation of ergosterol to form ergosterol-glucoside. Shows also activity in vitro on other sterols such as cholesterol, beta-sitosterol, stigmasterol and tomatidine. Probable sterol 3-beta-glucosyltransferase that mediates autophagic degradation of peroxisomes (pexophagy). This Komagataella phaffii (strain GS115 / ATCC 20864) (Yeast) protein is Sterol 3-beta-glucosyltransferase.